Here is a 296-residue protein sequence, read N- to C-terminus: Cytidine deaminase (296 aa).

CMP/dCMP-type deaminase domains are found at residues 47–167 and 186–296; these read TEAE…FGPK and DSAD…IDPV. 88-90 contributes to the substrate binding site; sequence NLE. His-101 serves as a coordination point for Zn(2+). Glu-103 (proton donor) is an active-site residue. Zn(2+)-binding residues include Cys-128 and Cys-131.

The protein belongs to the cytidine and deoxycytidylate deaminase family. As to quaternary structure, homodimer. The cofactor is Zn(2+).

It carries out the reaction cytidine + H2O + H(+) = uridine + NH4(+). It catalyses the reaction 2'-deoxycytidine + H2O + H(+) = 2'-deoxyuridine + NH4(+). This enzyme scavenges exogenous and endogenous cytidine and 2'-deoxycytidine for UMP synthesis. In Shewanella baltica (strain OS155 / ATCC BAA-1091), this protein is Cytidine deaminase.